Reading from the N-terminus, the 76-residue chain is Large ribosomal subunit protein bL31 (76 aa).

It belongs to the bacterial ribosomal protein bL31 family. Type A subfamily. As to quaternary structure, part of the 50S ribosomal subunit.

Its function is as follows. Binds the 23S rRNA. This Rhizorhabdus wittichii (strain DSM 6014 / CCUG 31198 / JCM 15750 / NBRC 105917 / EY 4224 / RW1) (Sphingomonas wittichii) protein is Large ribosomal subunit protein bL31.